Consider the following 566-residue polypeptide: Nitrate/nitrite sensor protein NarQ (566 aa).

Over 1–13 (MIVKRPVSASLAR) the chain is Cytoplasmic. Residues 14–34 (AFFYIVLLSILSTGIALLTLA) traverse the membrane as a helical segment. Residues 35–146 (SSLRDAEAIN…LALQHYAERK (112 aa)) lie on the Periplasmic side of the membrane. A helical membrane pass occupies residues 147–167 (MLLVVAISLAGGIGIFTLVFF). Residues 168–566 (TLRRIRHQVV…SAEGEESQLM (399 aa)) are Cytoplasmic-facing. Residues 174 to 227 (HQVVAPLNQLVTASQRIEHGQFDSPPLDTNLPNELGLLAKTFNQMSSELHKLYR) enclose the HAMP domain. The 196-residue stretch at 364-559 (TIARELHDSL…LVSISFRSAE (196 aa)) folds into the Histidine kinase domain. Phosphohistidine; by autocatalysis is present on histidine 370.

Its subcellular location is the cell inner membrane. It catalyses the reaction ATP + protein L-histidine = ADP + protein N-phospho-L-histidine.. Acts as a sensor for nitrate/nitrite and transduces signal of nitrate/nitrite availability to the NarL/NarP proteins. NarQ probably activates NarL and NarP by phosphorylation. NarQ probably negatively regulates the NarL protein by dephosphorylation. The sequence is that of Nitrate/nitrite sensor protein NarQ (narQ) from Escherichia coli (strain K12).